The chain runs to 213 residues: dITP/XTP pyrophosphatase (213 aa).

7 to 12 (TSNLDK) is a binding site for substrate. Asp74 acts as the Proton acceptor in catalysis. Asp74 contacts Mg(2+). Substrate contacts are provided by residues Ser75, 165-168 (FGYD), Lys188, and 193-194 (HR).

Belongs to the HAM1 NTPase family. In terms of assembly, homodimer. Mg(2+) serves as cofactor.

The enzyme catalyses XTP + H2O = XMP + diphosphate + H(+). It carries out the reaction dITP + H2O = dIMP + diphosphate + H(+). It catalyses the reaction ITP + H2O = IMP + diphosphate + H(+). Functionally, pyrophosphatase that catalyzes the hydrolysis of nucleoside triphosphates to their monophosphate derivatives, with a high preference for the non-canonical purine nucleotides XTP (xanthosine triphosphate), dITP (deoxyinosine triphosphate) and ITP. Seems to function as a house-cleaning enzyme that removes non-canonical purine nucleotides from the nucleotide pool, thus preventing their incorporation into DNA/RNA and avoiding chromosomal lesions. This is dITP/XTP pyrophosphatase from Campylobacter concisus (strain 13826).